The following is a 305-amino-acid chain: MELIFLGTSAGVPTRTRNVTAILLNLQHPTQSGLWLFDCGEGTQHQLLHTAFNPGKLDKIFISHLHGDHLFGLPGLLCSRSMSGIIQPLTIYGPHGIREFVETALRISGSWTDYPLEIVEIGAGEIFDDGLRKVTAYPMEHPLECYGYRIEEHDKPGALNAQALKAAGVPPGPLFQELKAGKTIMLDDGRQINGADYLAVPVPGKALAIFGDTGPCDAALELAKGVDVMVHEATLDMAMEAKANSRGHSSTRQAAALAREAGVGKLIITHVSSRYDDKGCQHLLRECRSIFPATELANDFAVFSI.

Positions 64, 66, 68, 69, 141, 212, and 270 each coordinate Zn(2+). Aspartate 68 (proton acceptor) is an active-site residue.

This sequence belongs to the RNase Z family. RNase BN subfamily. As to quaternary structure, homodimer. Zn(2+) is required as a cofactor.

Functionally, zinc phosphodiesterase, which has both exoribonuclease and endoribonuclease activities. This chain is Ribonuclease BN, found in Escherichia coli O45:K1 (strain S88 / ExPEC).